We begin with the raw amino-acid sequence, 229 residues long: Flagellar L-ring protein 1 (229 aa).

The signal sequence occupies residues 1–18; the sequence is MYLRKISAPLMTMLLLNG. Residue cysteine 19 is the site of N-palmitoyl cysteine attachment. Cysteine 19 is lipidated: S-diacylglycerol cysteine.

It belongs to the FlgH family. In terms of assembly, the basal body constitutes a major portion of the flagellar organelle and consists of four rings (L,P,S, and M) mounted on a central rod.

It localises to the cell outer membrane. The protein localises to the bacterial flagellum basal body. Functionally, assembles around the rod to form the L-ring and probably protects the motor/basal body from shearing forces during rotation. The protein is Flagellar L-ring protein 1 (flgH1) of Yersinia pseudotuberculosis serotype I (strain IP32953).